The following is a 454-amino-acid chain: Bifunctional protein GlmU (454 aa).

Residues 1 to 230 (MSGRFAVILA…LSETMGVNDR (230 aa)) are pyrophosphorylase. UDP-N-acetyl-alpha-D-glucosamine contacts are provided by residues 9 to 12 (LAAG), Lys-23, Gln-73, and 78 to 79 (GT). Asp-103 contributes to the Mg(2+) binding site. UDP-N-acetyl-alpha-D-glucosamine contacts are provided by Gly-140, Glu-155, Asn-170, and Asn-228. Mg(2+) is bound at residue Asn-228. The interval 231 to 251 (VALSQAEAAMRKRINEEWMRQ) is linker. The interval 252 to 454 (GVTIIDPQTT…NKDNYVKKDV (203 aa)) is N-acetyltransferase. Arg-333 and Lys-351 together coordinate UDP-N-acetyl-alpha-D-glucosamine. His-363 acts as the Proton acceptor in catalysis. Residues Tyr-366 and Asn-377 each coordinate UDP-N-acetyl-alpha-D-glucosamine. Acetyl-CoA contacts are provided by residues 386–387 (NY), Ser-405, Ala-423, and Arg-440.

The protein in the N-terminal section; belongs to the N-acetylglucosamine-1-phosphate uridyltransferase family. In the C-terminal section; belongs to the transferase hexapeptide repeat family. In terms of assembly, homotrimer. Mg(2+) is required as a cofactor.

The protein resides in the cytoplasm. It carries out the reaction alpha-D-glucosamine 1-phosphate + acetyl-CoA = N-acetyl-alpha-D-glucosamine 1-phosphate + CoA + H(+). The catalysed reaction is N-acetyl-alpha-D-glucosamine 1-phosphate + UTP + H(+) = UDP-N-acetyl-alpha-D-glucosamine + diphosphate. Its pathway is nucleotide-sugar biosynthesis; UDP-N-acetyl-alpha-D-glucosamine biosynthesis; N-acetyl-alpha-D-glucosamine 1-phosphate from alpha-D-glucosamine 6-phosphate (route II): step 2/2. It functions in the pathway nucleotide-sugar biosynthesis; UDP-N-acetyl-alpha-D-glucosamine biosynthesis; UDP-N-acetyl-alpha-D-glucosamine from N-acetyl-alpha-D-glucosamine 1-phosphate: step 1/1. It participates in bacterial outer membrane biogenesis; LPS lipid A biosynthesis. Functionally, catalyzes the last two sequential reactions in the de novo biosynthetic pathway for UDP-N-acetylglucosamine (UDP-GlcNAc). The C-terminal domain catalyzes the transfer of acetyl group from acetyl coenzyme A to glucosamine-1-phosphate (GlcN-1-P) to produce N-acetylglucosamine-1-phosphate (GlcNAc-1-P), which is converted into UDP-GlcNAc by the transfer of uridine 5-monophosphate (from uridine 5-triphosphate), a reaction catalyzed by the N-terminal domain. This is Bifunctional protein GlmU from Shouchella clausii (strain KSM-K16) (Alkalihalobacillus clausii).